A 360-amino-acid polypeptide reads, in one-letter code: Phenylalanine--tRNA ligase alpha subunit (360 aa).

Residue glutamate 260 coordinates Mg(2+).

This sequence belongs to the class-II aminoacyl-tRNA synthetase family. Phe-tRNA synthetase alpha subunit type 1 subfamily. As to quaternary structure, tetramer of two alpha and two beta subunits. The cofactor is Mg(2+).

The protein resides in the cytoplasm. It catalyses the reaction tRNA(Phe) + L-phenylalanine + ATP = L-phenylalanyl-tRNA(Phe) + AMP + diphosphate + H(+). The chain is Phenylalanine--tRNA ligase alpha subunit from Rhizobium etli (strain ATCC 51251 / DSM 11541 / JCM 21823 / NBRC 15573 / CFN 42).